We begin with the raw amino-acid sequence, 534 residues long: Chaperonin GroEL (534 aa).

ATP is bound by residues Thr29 to Pro32, Asp86 to Thr90, Gly413, and Asp494.

It belongs to the chaperonin (HSP60) family. In terms of assembly, forms a cylinder of 14 subunits composed of two heptameric rings stacked back-to-back. Interacts with the co-chaperonin GroES.

Its subcellular location is the cytoplasm. The catalysed reaction is ATP + H2O + a folded polypeptide = ADP + phosphate + an unfolded polypeptide.. Together with its co-chaperonin GroES, plays an essential role in assisting protein folding. The GroEL-GroES system forms a nano-cage that allows encapsulation of the non-native substrate proteins and provides a physical environment optimized to promote and accelerate protein folding. This Mycoplasmoides gallisepticum (strain R(low / passage 15 / clone 2)) (Mycoplasma gallisepticum) protein is Chaperonin GroEL.